The chain runs to 131 residues: U-scoloptoxin-Er5e (131 aa).

An N-terminal signal peptide occupies residues 1–22 (MKTNCEFPLLCLLIVLVANVEG). Residues 23–94 (EVEDNELKMV…KRLWRNWERR (72 aa)) constitute a propeptide that is removed on maturation. 3 RLWRNWE repeats span residues 34-40 (RLWRNWE), 61-67 (RLWRNWE), and 86-92 (RLWRNWE). Residue Gln-95 is modified to Pyrrolidone carboxylic acid. The RLWRNWE 4; approximate repeat unit spans residues 107 to 113 (ELWRNWE). A propeptide spanning residues 112 to 131 (WEDLKRRQVVDLNDEQKTTG) is cleaved from the precursor.

This sequence belongs to the scoloptoxin-08 family. In terms of tissue distribution, expressed by the venom gland.

It localises to the secreted. This is U-scoloptoxin-Er5e from Ethmostigmus rubripes (Giant centipede).